Consider the following 177-residue polypeptide: Acireductone dioxygenase (177 aa).

His-97, His-99, Glu-103, and His-141 together coordinate Fe(2+). 4 residues coordinate Ni(2+): His-97, His-99, Glu-103, and His-141.

This sequence belongs to the acireductone dioxygenase (ARD) family. Monomer. The cofactor is Fe(2+). Ni(2+) is required as a cofactor.

It carries out the reaction 1,2-dihydroxy-5-(methylsulfanyl)pent-1-en-3-one + O2 = 3-(methylsulfanyl)propanoate + CO + formate + 2 H(+). It catalyses the reaction 1,2-dihydroxy-5-(methylsulfanyl)pent-1-en-3-one + O2 = 4-methylsulfanyl-2-oxobutanoate + formate + 2 H(+). The protein operates within amino-acid biosynthesis; L-methionine biosynthesis via salvage pathway; L-methionine from S-methyl-5-thio-alpha-D-ribose 1-phosphate: step 5/6. Functionally, catalyzes 2 different reactions between oxygen and the acireductone 1,2-dihydroxy-3-keto-5-methylthiopentene (DHK-MTPene) depending upon the metal bound in the active site. Fe-containing acireductone dioxygenase (Fe-ARD) produces formate and 2-keto-4-methylthiobutyrate (KMTB), the alpha-ketoacid precursor of methionine in the methionine recycle pathway. Ni-containing acireductone dioxygenase (Ni-ARD) produces methylthiopropionate, carbon monoxide and formate, and does not lie on the methionine recycle pathway. The protein is Acireductone dioxygenase of Leptospira biflexa serovar Patoc (strain Patoc 1 / ATCC 23582 / Paris).